Consider the following 163-residue polypeptide: Cyanate hydratase (163 aa).

Catalysis depends on residues arginine 103, glutamate 106, and serine 129.

This sequence belongs to the cyanase family.

The catalysed reaction is cyanate + hydrogencarbonate + 3 H(+) = NH4(+) + 2 CO2. Functionally, catalyzes the reaction of cyanate with bicarbonate to produce ammonia and carbon dioxide. The polypeptide is Cyanate hydratase (Talaromyces marneffei (strain ATCC 18224 / CBS 334.59 / QM 7333) (Penicillium marneffei)).